Here is a 118-residue protein sequence, read N- to C-terminus: Small ribosomal subunit protein uS13 (118 aa).

A disordered region spans residues 93-118 (RSLPVRGQRSKTNARTRKGPRKPIKK).

The protein belongs to the universal ribosomal protein uS13 family. As to quaternary structure, part of the 30S ribosomal subunit. Forms a loose heterodimer with protein S19. Forms two bridges to the 50S subunit in the 70S ribosome.

In terms of biological role, located at the top of the head of the 30S subunit, it contacts several helices of the 16S rRNA. In the 70S ribosome it contacts the 23S rRNA (bridge B1a) and protein L5 of the 50S subunit (bridge B1b), connecting the 2 subunits; these bridges are implicated in subunit movement. Contacts the tRNAs in the A and P-sites. The protein is Small ribosomal subunit protein uS13 of Teredinibacter turnerae (strain ATCC 39867 / T7901).